The primary structure comprises 474 residues: MWTVQNRESLGLLSFPVMVAMVCCAHSSNEPSNMSYVKETVDRLLKGYDIRLRPDFGGPPVDVGMRIDVASIDMVSEVNMDYTLTMYFQQSWKDKRLSYSGIPLNLTLDNRVADQLWVPDTYFLNDKKSFVHGVTVKNRMIRLHPDGTVLYGLRITTTAACMMDLRRYPLDEQNCTLEIESYGYTTDDIEFYWNGGEGAVTGVNKIELPQFSIVDYKMVSKKVEFTTGAYPRLSLSFRLKRNIGYFILQTYMPSTLITILSWVSFWINYDASAARVALGITTVLTMTTISTHLRETLPKIPYVKAIDIYLMGCFVFVFLALLEYAFVNYIFFGKGPQKKGASKQDQSANEKNKLEMNKVQVDAHGNILLSTLEIRNETSGSEVLTGVSDPKATMYSYDSASIQYRKPLSSREGFGRGLDRHGVPGKGRIRRRASQLKVKIPDLTDVNSIDKWSRMFFPITFSLFNVVYWLYYVH.

The signal sequence occupies residues 1-25; the sequence is MWTVQNRESLGLLSFPVMVAMVCCA. The Extracellular portion of the chain corresponds to 26 to 245; that stretch reads HSSNEPSNMS…SFRLKRNIGY (220 aa). N-linked (GlcNAc...) asparagine glycosylation is found at asparagine 33 and asparagine 105. Tyrosine 122 serves as a coordination point for histamine. A disulfide bridge connects residues cysteine 161 and cysteine 175. Residue asparagine 174 is glycosylated (N-linked (GlcNAc...) asparagine). Residues 181–182 and threonine 227 contribute to the histamine site; that span reads SY. Positions 182 and 227 each coordinate 4-aminobutanoate. 3 helical membrane passes run 246-267, 271-293, and 305-327; these read FILQ…SFWI, ASAA…STHL, and AIDI…YAFV. Topologically, residues 328 to 451 are cytoplasmic; the sequence is NYIFFGKGPQ…DLTDVNSIDK (124 aa). Residues 452-473 form a helical membrane-spanning segment; it reads WSRMFFPITFSLFNVVYWLYYV.

This sequence belongs to the ligand-gated ion channel (TC 1.A.9) family. Gamma-aminobutyric acid receptor (TC 1.A.9.5) subfamily. GABRB1 sub-subfamily. As to quaternary structure, heteropentamer, formed by a combination of alpha (GABRA1-6), beta (GABRB1-3), gamma (GABRG1-3), delta (GABRD), epsilon (GABRE), rho (GABRR1-3), pi (GABRP) and theta (GABRQ) chains, each subunit exhibiting distinct physiological and pharmacological properties. Binds UBQLN1.

The protein resides in the postsynaptic cell membrane. Its subcellular location is the cell membrane. The catalysed reaction is chloride(in) = chloride(out). Its activity is regulated as follows. Potentiated by histamine. Functionally, beta subunit of the heteropentameric ligand-gated chloride channel gated by gamma-aminobutyric acid (GABA), a major inhibitory neurotransmitter in the brain. GABA-gated chloride channels, also named GABA(A) receptors (GABAAR), consist of five subunits arranged around a central pore and contain GABA active binding site(s) located at the alpha and beta subunit interface(s). When activated by GABA, GABAARs selectively allow the flow of chloride anions across the cell membrane down their electrochemical gradient. Chloride influx into the postsynaptic neuron following GABAAR opening decreases the neuron ability to generate a new action potential, thereby reducing nerve transmission. Beta-containing GABAARs can simultaneously bind GABA and histamine where histamine binds at the interface of two neighboring beta subunits, which may be involved in the regulation of sleep and wakefulness. The chain is Gamma-aminobutyric acid receptor subunit beta-1 from Rattus norvegicus (Rat).